The chain runs to 736 residues: Zinc finger CCCH domain-containing protein 14 (736 aa).

Met-1 is subject to N-acetylmethionine. Residues 77–103 (TTEPSSLKSPDTSIFDSNVPSNKSSFS) are compositionally biased toward polar residues. A disordered region spans residues 77-153 (TTEPSSLKSP…RHSYDDGAST (77 aa)). Ser-85 carries the post-translational modification Phosphoserine. Glycyl lysine isopeptide (Lys-Gly) (interchain with G-Cter in SUMO2) cross-links involve residues Lys-99, Lys-139, Lys-175, and Lys-198. Over residues 123-148 (RPEKRDSRVSTSSQEHKSTNVRHSYD) the composition is skewed to basic and acidic residues. Ser-240 bears the Phosphoserine mark. Residues Lys-245, Lys-283, and Lys-295 each participate in a glycyl lysine isopeptide (Lys-Gly) (interchain with G-Cter in SUMO2) cross-link. The segment at 308–350 (FSHDGEEEEEDEDYGTRVGSLSSSVSVPAKPERRPSLPPSKQA) is disordered. Ser-309, Ser-327, and Ser-343 each carry phosphoserine. Lys-357 bears the N6-acetyllysine; alternate mark. Lys-357 is covalently cross-linked (Glycyl lysine isopeptide (Lys-Gly) (interchain with G-Cter in SUMO2); alternate). A compositionally biased stretch (polar residues) spans 367-380 (TKTTNYPAVPQKQT). Positions 367–386 (TKTTNYPAVPQKQTLPVAPR) are disordered. Lys-378 is covalently cross-linked (Glycyl lysine isopeptide (Lys-Gly) (interchain with G-Cter in SUMO2)). A phosphoserine mark is found at Ser-390 and Ser-409. Residues 400–420 (QGQNRAPRISPPVKEEEAKGD) form a disordered region. Residues Lys-413 and Lys-489 each participate in a glycyl lysine isopeptide (Lys-Gly) (interchain with G-Cter in SUMO2) cross-link. Ser-498, Ser-515, Ser-527, and Ser-620 each carry phosphoserine. 5 C3H1-type zinc fingers span residues 595–620 (EKLLERCKYWPACKNGDECVYHHPIS), 621–640 (PCKAFPNCKFAEKCLFVHPN), 641–656 (CKYDAKCTKADCPFTH), 682–699 (CRYFPACKKMECPFYHPK), and 701–719 (CRFNTQCTRPDCTFYHPTI).

Belongs to the ZC3H14 family. As to quaternary structure, homodimer; facilitating circular RNAs (circRNAs) formation. Associates with the spliceosome. Interacts with HOOK2. Interacts with ZFC3H1 in a RNase-sensitive manner.

The protein resides in the nucleus speckle. In terms of biological role, RNA-binding protein involved in the biogenesis of circular RNAs (circRNAs), which are produced by back-splicing circularization of pre-mRNAs. Acts by binding to both exon-intron boundary and 3'-UTR of pre-mRNAs to promote circRNA biogenesis through dimerization and the association with the spliceosome. Required for spermatogenesis via involvement in circRNA biogenesis. Regulates the pre-mRNA processing of ATP5MC1; preventing its degradation. Also binds the poly(A) tail of mRNAs; controlling poly(A) length in neuronal cells. This is Zinc finger CCCH domain-containing protein 14 from Rattus norvegicus (Rat).